The following is a 176-amino-acid chain: Probable DNA-directed RNA polymerase subunit delta (176 aa).

The HTH HARE-type domain occupies Leu-14–Trp-81. Disordered stretches follow at residues Val-91 to Asp-119 and Asp-140 to Lys-176. Composition is skewed to acidic residues over residues Asp-105 to Asp-119 and Thr-159 to Lys-176.

The protein belongs to the RpoE family. RNAP is composed of a core of 2 alpha, a beta and a beta' subunits. The core is associated with a delta subunit and one of several sigma factors.

Functionally, participates in both the initiation and recycling phases of transcription. In the presence of the delta subunit, RNAP displays an increased specificity of transcription, a decreased affinity for nucleic acids, and an increased efficiency of RNA synthesis because of enhanced recycling. This Listeria welshimeri serovar 6b (strain ATCC 35897 / DSM 20650 / CCUG 15529 / CIP 8149 / NCTC 11857 / SLCC 5334 / V8) protein is Probable DNA-directed RNA polymerase subunit delta.